A 500-amino-acid polypeptide reads, in one-letter code: Aspartyl/glutamyl-tRNA(Asn/Gln) amidotransferase subunit B (500 aa).

This sequence belongs to the GatB/GatE family. GatB subfamily. Heterotrimer of A, B and C subunits.

The enzyme catalyses L-glutamyl-tRNA(Gln) + L-glutamine + ATP + H2O = L-glutaminyl-tRNA(Gln) + L-glutamate + ADP + phosphate + H(+). It carries out the reaction L-aspartyl-tRNA(Asn) + L-glutamine + ATP + H2O = L-asparaginyl-tRNA(Asn) + L-glutamate + ADP + phosphate + 2 H(+). Functionally, allows the formation of correctly charged Asn-tRNA(Asn) or Gln-tRNA(Gln) through the transamidation of misacylated Asp-tRNA(Asn) or Glu-tRNA(Gln) in organisms which lack either or both of asparaginyl-tRNA or glutaminyl-tRNA synthetases. The reaction takes place in the presence of glutamine and ATP through an activated phospho-Asp-tRNA(Asn) or phospho-Glu-tRNA(Gln). In Brucella anthropi (strain ATCC 49188 / DSM 6882 / CCUG 24695 / JCM 21032 / LMG 3331 / NBRC 15819 / NCTC 12168 / Alc 37) (Ochrobactrum anthropi), this protein is Aspartyl/glutamyl-tRNA(Asn/Gln) amidotransferase subunit B.